The sequence spans 484 residues: Glutamyl-tRNA(Gln) amidotransferase subunit A (484 aa).

Residues lysine 77 and serine 152 each act as charge relay system in the active site. The active-site Acyl-ester intermediate is serine 176.

It belongs to the amidase family. GatA subfamily. In terms of assembly, heterotrimer of A, B and C subunits.

The catalysed reaction is L-glutamyl-tRNA(Gln) + L-glutamine + ATP + H2O = L-glutaminyl-tRNA(Gln) + L-glutamate + ADP + phosphate + H(+). In terms of biological role, allows the formation of correctly charged Gln-tRNA(Gln) through the transamidation of misacylated Glu-tRNA(Gln) in organisms which lack glutaminyl-tRNA synthetase. The reaction takes place in the presence of glutamine and ATP through an activated gamma-phospho-Glu-tRNA(Gln). The chain is Glutamyl-tRNA(Gln) amidotransferase subunit A from Lacticaseibacillus paracasei (strain ATCC 334 / BCRC 17002 / CCUG 31169 / CIP 107868 / KCTC 3260 / NRRL B-441) (Lactobacillus paracasei).